A 462-amino-acid polypeptide reads, in one-letter code: Stabilizer of axonemal microtubules 1 (462 aa).

Mn regions lie at residues 30 to 64 (KPCF…KVNI), 65 to 97 (PMEG…PIQD), 98 to 131 (EMDF…QCND), 132 to 165 (KMEC…PASC), 166 to 199 (RFDH…LCNI), 200 to 232 (PLES…PSEV), 233 to 266 (PFDS…GLDI), 267 to 299 (PFPS…PPEG), 300 to 332 (KMDL…KKSD), 333 to 366 (RFES…FSDE), 367 to 400 (PMEY…RVNI), and 401 to 434 (PLEG…IFDE).

The protein belongs to the FAM154 family. In terms of assembly, associates with microtubules via the Mn regions.

It localises to the cytoplasm. Its subcellular location is the cytoskeleton. The protein localises to the microtubule organizing center. It is found in the centrosome. The protein resides in the centriole. It localises to the cilium basal body. Its subcellular location is the cilium axoneme. Its function is as follows. May play a role in the regulation of cilium length. Stabilizes microtubules at low temperature. This is Stabilizer of axonemal microtubules 1 (Saxo1) from Rattus norvegicus (Rat).